A 107-amino-acid polypeptide reads, in one-letter code: Anti-adapter protein IraM (107 aa).

Belongs to the IraM/RssC family.

Its subcellular location is the cytoplasm. Its function is as follows. Inhibits RpoS proteolysis by regulating RssB activity, thereby increasing the stability of the sigma stress factor RpoS during magnesium starvation. This chain is Anti-adapter protein IraM, found in Escherichia coli (strain K12 / MC4100 / BW2952).